Reading from the N-terminus, the 539-residue chain is Chaperonin GroEL (539 aa).

Residues Thr30–Pro33, Lys51, Asp87–Thr91, Gly415, Asn479–Ala481, and Asp495 contribute to the ATP site.

This sequence belongs to the chaperonin (HSP60) family. In terms of assembly, forms a cylinder of 14 subunits composed of two heptameric rings stacked back-to-back. Interacts with the co-chaperonin GroES.

The protein resides in the cytoplasm. It catalyses the reaction ATP + H2O + a folded polypeptide = ADP + phosphate + an unfolded polypeptide.. Together with its co-chaperonin GroES, plays an essential role in assisting protein folding. The GroEL-GroES system forms a nano-cage that allows encapsulation of the non-native substrate proteins and provides a physical environment optimized to promote and accelerate protein folding. The sequence is that of Chaperonin GroEL from Kluyvera intermedia (Enterobacter intermedius).